We begin with the raw amino-acid sequence, 82 residues long: Large ribosomal subunit protein uL23 (82 aa).

This sequence belongs to the universal ribosomal protein uL23 family. As to quaternary structure, part of the 50S ribosomal subunit. Contacts protein L29.

Its function is as follows. Binds to 23S rRNA. One of the proteins that surrounds the polypeptide exit tunnel on the outside of the ribosome. The polypeptide is Large ribosomal subunit protein uL23 (Methanococcoides burtonii (strain DSM 6242 / NBRC 107633 / OCM 468 / ACE-M)).